The chain runs to 234 residues: MQTYSTPLTLVIVTSLFLFTTQGSSSNAVEPTKKPLKLANYRATCEDRTRTLVTRLNTSHHSVVWQRYDIYSRYMRRMPPLCIITDAYKETTRQGGAAFACTRQNLTLYNLTVKDTGVYLLQDQYTGDVEAFYLIIHPRSFCRALETRRCFYPGPGRVVVTDSQEADRAIISDLKRQWSGLSLHCAWVSGMMIFVGALVICFLRSQRIGEQDAEHLRTDLDTEPLLLTVDGDLQ.

The first 23 residues, 1 to 23 (MQTYSTPLTLVIVTSLFLFTTQG), serve as a signal peptide directing secretion. An Ig-like V-type domain is found at 24–122 (SSSNAVEPTK…VKDTGVYLLQ (99 aa)). Residues 24 to 182 (SSSNAVEPTK…DLKRQWSGLS (159 aa)) lie on the Extracellular side of the membrane. Residues asparagine 57, asparagine 105, and asparagine 110 are each glycosylated (N-linked (GlcNAc...) asparagine; by host). A helical transmembrane segment spans residues 183-203 (LHCAWVSGMMIFVGALVICFL). Residues 204 to 234 (RSQRIGEQDAEHLRTDLDTEPLLLTVDGDLQ) lie on the Cytoplasmic side of the membrane.

It belongs to the RL11 family.

Its subcellular location is the membrane. This Homo sapiens (Human) protein is Viral Fc-gamma receptor-like protein IR11.